Here is an 80-residue protein sequence, read N- to C-terminus: Exodeoxyribonuclease 7 small subunit (80 aa).

This sequence belongs to the XseB family. In terms of assembly, heterooligomer composed of large and small subunits.

The protein localises to the cytoplasm. It catalyses the reaction Exonucleolytic cleavage in either 5'- to 3'- or 3'- to 5'-direction to yield nucleoside 5'-phosphates.. Bidirectionally degrades single-stranded DNA into large acid-insoluble oligonucleotides, which are then degraded further into small acid-soluble oligonucleotides. The chain is Exodeoxyribonuclease 7 small subunit from Aliivibrio fischeri (strain ATCC 700601 / ES114) (Vibrio fischeri).